The chain runs to 347 residues: Gentisate 1,2 dioxygenase 1 (347 aa).

Residues 96–163 (LQLILPGEVA…DSDKPMIWMD (68 aa)) form the Cupin type-2 domain.

Belongs to the gentisate 1,2-dioxygenase family. As to quaternary structure, homotetramer. It depends on Fe(2+) as a cofactor.

It catalyses the reaction 2,5-dihydroxybenzoate + O2 = 3-maleylpyruvate + H(+). With respect to regulation, completely inhibited by the presence of 5 mM Cu(2+). Partially inhibited with 5 mM Mn(2+), Zn(2+) or EDTA. In terms of biological role, involved in the degradation of gentisate. Catalyzes the conversion of gentisate (2,5-dihydroxybenzoate) to maleylpyruvate. Exhibits broad substrate specificities towards alkyl and halogenated gentisates. This Aquipseudomonas alcaligenes (Pseudomonas alcaligenes) protein is Gentisate 1,2 dioxygenase 1.